The primary structure comprises 406 residues: Cysteine desulfurase (406 aa).

K226 carries the post-translational modification N6-(pyridoxal phosphate)lysine. The active-site Cysteine persulfide intermediate is the C364.

This sequence belongs to the class-V pyridoxal-phosphate-dependent aminotransferase family. Csd subfamily. As to quaternary structure, homodimer. Interacts with SufE and the SufBCD complex composed of SufB, SufC and SufD. The interaction with SufE is required to mediate the direct transfer of the sulfur atom from the S-sulfanylcysteine. Pyridoxal 5'-phosphate is required as a cofactor.

The protein localises to the cytoplasm. The catalysed reaction is (sulfur carrier)-H + L-cysteine = (sulfur carrier)-SH + L-alanine. It carries out the reaction L-selenocysteine + AH2 = hydrogenselenide + L-alanine + A + H(+). Its pathway is cofactor biosynthesis; iron-sulfur cluster biosynthesis. Functionally, cysteine desulfurases mobilize the sulfur from L-cysteine to yield L-alanine, an essential step in sulfur metabolism for biosynthesis of a variety of sulfur-containing biomolecules. Component of the suf operon, which is activated and required under specific conditions such as oxidative stress and iron limitation. Acts as a potent selenocysteine lyase in vitro, that mobilizes selenium from L-selenocysteine. Selenocysteine lyase activity is however unsure in vivo. The chain is Cysteine desulfurase from Klebsiella pneumoniae (strain 342).